The following is a 557-amino-acid chain: Copine-4 (557 aa).

2 C2 domains span residues 3-131 (KMSN…SKSL) and 137-264 (TAGK…VQWE). 5 residues coordinate Ca(2+): aspartate 170, aspartate 176, aspartate 232, aspartate 234, and aspartate 240. The VWFA domain occupies 305–507 (QIQFTVAIDF…VLRDIVQFVP (203 aa)).

It belongs to the copine family. Interacts (via VWFA domain) with ACTB, BCOR, BICD2, CCDC22, CDC42BPB, CEP162, MYCBP2, NONO, PDCD6, PITPNM2, RDX, SKIL, SKT, SPTBN1, UBE2O and WTAP. Ca(2+) serves as cofactor.

Probable calcium-dependent phospholipid-binding protein that may play a role in calcium-mediated intracellular processes. In Mus musculus (Mouse), this protein is Copine-4.